The sequence spans 213 residues: 3-isopropylmalate dehydratase small subunit (213 aa).

The protein belongs to the LeuD family. LeuD type 1 subfamily. Heterodimer of LeuC and LeuD.

The catalysed reaction is (2R,3S)-3-isopropylmalate = (2S)-2-isopropylmalate. Its pathway is amino-acid biosynthesis; L-leucine biosynthesis; L-leucine from 3-methyl-2-oxobutanoate: step 2/4. Catalyzes the isomerization between 2-isopropylmalate and 3-isopropylmalate, via the formation of 2-isopropylmaleate. In Neisseria meningitidis serogroup A / serotype 4A (strain DSM 15465 / Z2491), this protein is 3-isopropylmalate dehydratase small subunit.